A 716-amino-acid chain; its full sequence is MSQSGTMSCCPGATNGSLGRSDGVAKMSPKDLFEQRKKYSNSNVIMHETSQYHVQHLATFIMDKSEAITSVDDAIRKLVQLSSKEKIWTQEMLLQVNDQSLRLLDIESQEELENFPLPTVQRSQTVLNQLRYPSVLLLVCQDSEQSKPDVHFFHCDEVEAELVHEDIESALADCRLGKKMRPQTLKGHQEKIRQRQSILPPPQGPAPIPFQHRGGDSPQAKNRVGPQVPLSEPGFRRRESQEEEPRALLAQKIEKETQILNCALDDIEWFVARLQKAAEAFKQLNQRKKGKKKGKKAPAEGVLTLRARPPSEGEFIDCFQKTKLAINLLAKLQKHIQNPSAAELVHFLFGPLDLIVNTCGGPDIARSVSCPLLSRDAVDFLRGHLVPKEMSLWESLGESWMRPRSEWPWEPQVPLYVPKFHSGWEPPMDVLQEAPWEVEGLASAPIEEVSPVSRQSIRNSQKHSPTSEPTPPGDALPPVSSPHTHRGYQPTPAMAKYVKILYDFTARNANELSVLKDEVLEVLEDGRQWWKLRSRSGQAGYVPCNILGEARPEDAGAPFEQAGQKYWGPASPTHKLPPSFPGNKDELMQHMDEVNDELIRKISNIRAQPQRHFRVERSQPVSQPLTYESGPDEVRAWLEAKAFSPRIVENLGILTGPQLFSLNKEELKKVCGEEGVRVYSQLTVQKAFLEKQQSGSELEELMNKFHSMNQRRGEDS.

Disordered stretches follow at residues 1 to 25 (MSQSGTMSCCPGATNGSLGRSDGVA) and 182 to 243 (PQTL…SQEE). One can recognise a PID domain in the interval 46-202 (MHETSQYHVQ…RQRQSILPPP (157 aa)). Residues 199 to 208 (LPPPQGPAPI) show a composition bias toward pro residues. The span at 234–243 (GFRRRESQEE) shows a compositional bias: basic and acidic residues. Ser240 bears the Phosphoserine mark. The residue at position 304 (Thr304) is a Phosphothreonine. The tract at residues 449–488 (VSPVSRQSIRNSQKHSPTSEPTPPGDALPPVSSPHTHRGY) is disordered. Ser450 is modified (phosphoserine). Positions 452-467 (VSRQSIRNSQKHSPTS) are enriched in polar residues. Phosphothreonine is present on Thr470. One can recognise an SH3 domain in the interval 493-552 (AMAKYVKILYDFTARNANELSVLKDEVLEVLEDGRQWWKLRSRSGQAGYVPCNILGEARP). Residue Ser571 is modified to Phosphoserine.

Belongs to the EPS8 family. Interacts with ABI1. Part of a complex that contains SOS1, ABI1 and EPS8L2. Associates with F-actin.

The protein localises to the cytoplasm. It localises to the cell projection. It is found in the stereocilium. Stimulates guanine exchange activity of SOS1. May play a role in membrane ruffling and remodeling of the actin cytoskeleton. In the cochlea, is required for stereocilia maintenance in adult hair cells. The sequence is that of Epidermal growth factor receptor kinase substrate 8-like protein 2 (EPS8L2) from Pongo abelii (Sumatran orangutan).